We begin with the raw amino-acid sequence, 290 residues long: Purine nucleoside phosphorylase (290 aa).

A phosphate-binding site is contributed by 68 to 69; that stretch reads RN. Residue methionine 204 coordinates substrate. Threonine 205 provides a ligand contact to phosphate.

This sequence belongs to the PNP/MTAP phosphorylase family. MTAP subfamily. Homotrimer.

The protein localises to the cytoplasm. Its subcellular location is the nucleus. It carries out the reaction a purine D-ribonucleoside + phosphate = a purine nucleobase + alpha-D-ribose 1-phosphate. It functions in the pathway purine metabolism; purine nucleoside salvage. Functionally, purine nucleoside phosphorylase involved in purine salvage. The polypeptide is Purine nucleoside phosphorylase (Drosophila melanogaster (Fruit fly)).